The sequence spans 154 residues: Phospholipase A2 OS1 (154 aa).

Positions 1–27 (MHPAHLLVLLAVCVSLLGAARIPPLPL) are cleaved as a signal peptide. Intrachain disulfides connect Cys38-Cys104, Cys54-Cys153, Cys56-Cys72, Cys71-Cys132, Cys78-Cys125, Cys88-Cys118, and Cys111-Cys123. Residues Gly57 and Gly59 each coordinate Ca(2+). His75 is an active-site residue. Asp76 is a Ca(2+) binding site. The active site involves Asp126.

The protein belongs to the phospholipase A2 family. Group I subfamily. D49 sub-subfamily. In terms of assembly, monomer. Ca(2+) is required as a cofactor. As to expression, expressed by the venom gland.

The protein localises to the secreted. It catalyses the reaction a 1,2-diacyl-sn-glycero-3-phosphocholine + H2O = a 1-acyl-sn-glycero-3-phosphocholine + a fatty acid + H(+). Its function is as follows. Snake venom phospholipase A2 (PLA2) that has a low specific activity on phospholipid substrates, and is neither neurotoxic, nor myotoxic. Induces endothelial cell migration which is mediated, at least in part, by its hydrolytic products. Shows antimalarial activity, but is not able to potently inhibit HIV-1 replication. Binds in a calcium-independent fashion with very high affinity to a muscle-type (M-type) PLA2 receptor, but is a very poor ligand for neuronal-type (N-type) receptors. PLA2 catalyzes the calcium-dependent hydrolysis of the 2-acyl groups in 3-sn-phosphoglycerides. The chain is Phospholipase A2 OS1 from Oxyuranus scutellatus scutellatus (Australian taipan).